The following is a 483-amino-acid chain: FAD-linked oxidoreductase easE (483 aa).

The FAD-binding PCMH-type domain occupies 10–193 (QGRLPFYSAV…TEATVRVFSD (184 aa)).

The protein belongs to the oxygen-dependent FAD-linked oxidoreductase family. FAD is required as a cofactor.

It participates in alkaloid biosynthesis; ergot alkaloid biosynthesis. Its function is as follows. FAD-linked oxidoreductase; part of the gene cluster that mediates the biosynthesis of fungal ergot alkaloid. DmaW catalyzes the first step of ergot alkaloid biosynthesis by condensing dimethylallyl diphosphate (DMAP) and tryptophan to form 4-dimethylallyl-L-tryptophan. The second step is catalyzed by the methyltransferase easF that methylates 4-dimethylallyl-L-tryptophan in the presence of S-adenosyl-L-methionine, resulting in the formation of 4-dimethylallyl-L-abrine. The catalase easC and the FAD-dependent oxidoreductase easE then transform 4-dimethylallyl-L-abrine to chanoclavine-I which is further oxidized by easD in the presence of NAD(+), resulting in the formation of chanoclavine-I aldehyde. Agroclavine dehydrogenase easG then mediates the conversion of chanoclavine-I aldehyde to agroclavine via a non-enzymatic adduct reaction: the substrate is an iminium intermediate that is formed spontaneously from chanoclavine-I aldehyde in the presence of glutathione. The presence of easA is not required to complete this reaction. Further conversion of agroclavine to paspalic acid is a two-step process involving oxidation of agroclavine to elymoclavine and of elymoclavine to paspalic acid, the second step being performed by the elymoclavine oxidase cloA. Paspalic acid is then further converted to D-lysergic acid. Ergopeptines are assembled from D-lysergic acid and three different amino acids by the D-lysergyl-peptide-synthetases composed each of a monomudular and a trimodular nonribosomal peptide synthetase subunit. LpsB and lpsC encode the monomodular subunits responsible for D-lysergic acid activation and incorporation into the ergopeptine backbone. LpsA1 and A2 subunits encode the trimodular nonribosomal peptide synthetase assembling the tripeptide portion of ergopeptines. LpsA1 is responsible for formation of the major ergopeptine, ergotamine, and lpsA2 for alpha-ergocryptine, the minor ergopeptine of the total alkaloid mixture elaborated by C.purpurea. D-lysergyl-tripeptides are assembled by the nonribosomal peptide synthetases and released as N-(D-lysergyl-aminoacyl)-lactams. Cyclolization of the D-lysergyl-tripeptides is performed by the Fe(2+)/2-ketoglutarate-dependent dioxygenase easH which introduces a hydroxyl group into N-(D-lysergyl-aminoacyl)-lactam at alpha-C of the aminoacyl residue followed by spontaneous condensation with the terminal lactam carbonyl group. This chain is FAD-linked oxidoreductase easE, found in Claviceps purpurea (strain 20.1) (Ergot fungus).